The chain runs to 1361 residues: MGSLKKDGEIGDEFTEALLYVNGVRRVLPDGLAHMTLLEYLRDLGLTGTKLGCGEGGCGACTVMVSSYDRKSKTSVHYAVNACLAPLYSVEGMHVISIEGLGHRKLGLHPVQESLASSHGSQCGFCTPGFIMSMYSLLRSSKNSPSEEEIEECLAGNLCRCTGYRPIVDAFRVFAKSDDALYCGVSSLSLQDGSTICPSTGKPCSCGSKTTNEVASCNEDRFQSISYSDIDGAKYTDKELIFPPELLLRKLTPLKLRGNGGITWYRPVCLQNLLELKANYPDAKLLVGNTEVGIEMRLKRLQYQVLISVAQVPELNALNVNDNGIEVGSALRLSELLRLFRKIVKERPAHETSACKAFIEQLKWFAGTQIRNVACIGGNICTASPISDLNPLWMASRAEFRITNCNGDVRSIPAKDFFLGYRKVDMGSNEILLSVFLPWTRPLEYVKEFKQAHRRDDDIAIVNGGMRVFLEDKGQQLFVSDASIAYGGVAPLSLCARKTEEFLIGKNWNKDLLQDALKVIQSDVVIKEDAPGGMVEFRKSLTLSFFFKFFLWVSHNVNNANSAIETFPPSHMSAVQPVPRLSRIGKQDYETVKQGTSVGSSEVHLSARMQVTGEAEYTDDTPVPPNTLHAAFVLSKVPHARILSIDDSAAKSSSGFVGLFLAKDIPGDNMIGPIVPDEELFATDVVTCVGQVIGVVVADTHENAKTAAGKVDVRYEELPAILSIKEAINAKSFHPNTEKRLRKGDVELCFQSGQCDRVIEGEVQMGGQEHFYLEPNGSLVWTVDGGSEVHMISSTQAPQKHQKYVSHVLGLPMSKVVCKTKRIGGGFGGKETRSAFIAAAASVPSYLLNRPVKLILDRDVDMMITGHRHSFLGKYKVGFTNEGKILALDLEIYNNGGNSLDLSLSVLERAMFHSDNVYEIPHVRIVGNVCFTNFPSNTAFRGFGGPQGMLITENWIQRIAAELNKSPEEIKEMNFQVEGSVTHYCQTLQHCTLHQLWKELKVSCNFLKARREADEFNSHNRWKKRGVAMVPTKFGISFTTKFMNQAGALVHVYTDGTVLVTHGGVEMGQGLHTKVAQVAASAFNIPLSSVFVSETSTDKVPNASPTAASASSDMYGAAVLDACEQIIARMEPVASKHNFNTFTELVSACYFQRIDLSAHGFHIVPDLGFDWISGKGNAFRYYTYGAAFAEVEIDTLTGDFHTRAADIMLDLGYSLNPAIDVGQIEGAFVQGLGWVALEELKWGDAAHKWIKPGSLLTCGPGNYKIPSINDMPFNLNVSLLKGNPNTKAIHSSKAVGEPPFFLASSVFFAIKEAIKAARTEVGLTDWFPLESPATPERIRMACFDEFSAPFVNSDFYPNLSV.

Positions 15–101 (TEALLYVNGV…GMHVISIEGL (87 aa)) constitute a 2Fe-2S ferredoxin-type domain. Residues Cys53, Cys58, Cys61, Cys83, Cys123, Cys126, Cys159, and Cys161 each contribute to the [2Fe-2S] cluster site. Residues 257-442 (RGNGGITWYR…LSVFLPWTRP (186 aa)) form the FAD-binding PCMH-type domain. FAD contacts are provided by residues 285-292 (LLVGNTEV), Phe365, 375-379 (CIGGN), Asp388, Leu432, and Lys450. Mo-molybdopterin is bound by residues Gln796 and Phe827. 2 residues coordinate substrate: Glu831 and Arg909. Residue Arg941 coordinates Mo-molybdopterin. Substrate contacts are provided by Phe943 and Thr1039. Residue Ala1108 participates in Mo-molybdopterin binding. Residue Glu1297 is the Proton acceptor of the active site.

Belongs to the xanthine dehydrogenase family. In terms of assembly, homodimer. [2Fe-2S] cluster serves as cofactor. It depends on FAD as a cofactor. Requires Mo-molybdopterin as cofactor. In terms of tissue distribution, expressed in roots, leaves, stems, flowers and siliques.

It carries out the reaction xanthine + NAD(+) + H2O = urate + NADH + H(+). The enzyme catalyses hypoxanthine + NAD(+) + H2O = xanthine + NADH + H(+). Functionally, key enzyme involved in purine catabolism. Catalyzes the oxidation of hypoxanthine to xanthine and the oxidation of xanthine to urate. Regulates the level of ureides and plays an important role during plant growth and development, senescence and response to stresses. Possesses NADH oxidase activity and may contribute to the generation of superoxide anions in planta. The sequence is that of Xanthine dehydrogenase 1 (XDH1) from Arabidopsis thaliana (Mouse-ear cress).